A 306-amino-acid chain; its full sequence is Probable pinoresinol-lariciresinol reductase 3 (306 aa).

NADP(+) is bound by residues 14–20 (GATGRLG), Arg-39, and Lys-46. Lys-131 serves as the catalytic Proton acceptor. Arg-135 provides a ligand contact to NADP(+).

This sequence belongs to the NmrA-type oxidoreductase family. Isoflavone reductase subfamily. Dimer.

Its function is as follows. Probable reductase that might be involved in the reduction of lariciresinol into secoisolariciresinol. In most plant species, a single enzyme is able to reduce both pinoresinol and lariciresinol efficiently while in Arabidopsis, PRR1 and PRR2 show a strict substrate selectivity for pinoresinol. The protein is Probable pinoresinol-lariciresinol reductase 3 (PLR3) of Arabidopsis thaliana (Mouse-ear cress).